The sequence spans 244 residues: Monothiol glutaredoxin-4 (244 aa).

Positions 2–106 constitute a Thioredoxin domain; sequence SVEITFVEQF…LKAAIDEYIQ (105 aa). Residues 147 to 244 form the Glutaredoxin domain; that stretch reads NERLSTLTNA…NGELQEMLPN (98 aa). Lys-164 provides a ligand contact to glutathione. [2Fe-2S] cluster is bound at residue Cys-172. Glutathione contacts are provided by residues 201–205 and 226–227; these read RQGLK and LD.

This sequence belongs to the glutaredoxin family. Monothiol subfamily. As to quaternary structure, homodimer. Interacts with php4.

The protein resides in the cytoplasm. The protein localises to the nucleus. Functionally, monothiol glutaredoxin involved in the biogenesis of iron-sulfur clusters. Binds one iron-sulfur cluster per dimer. The iron-sulfur cluster is bound between subunits, and is complexed by a bound glutathione and a cysteine residue from each subunit. This Schizosaccharomyces pombe (strain 972 / ATCC 24843) (Fission yeast) protein is Monothiol glutaredoxin-4 (grx4).